A 156-amino-acid chain; its full sequence is uncharacterized protein (156 aa).

The active site involves histidine 55.

It belongs to the thioester dehydratase family. FabZ subfamily.

This is an uncharacterized protein from Halalkalibacterium halodurans (strain ATCC BAA-125 / DSM 18197 / FERM 7344 / JCM 9153 / C-125) (Bacillus halodurans).